Consider the following 185-residue polypeptide: Ribosome-recycling factor (185 aa).

This sequence belongs to the RRF family.

It localises to the cytoplasm. Its function is as follows. Responsible for the release of ribosomes from messenger RNA at the termination of protein biosynthesis. May increase the efficiency of translation by recycling ribosomes from one round of translation to another. This chain is Ribosome-recycling factor, found in Buchnera aphidicola subsp. Acyrthosiphon pisum (strain 5A).